We begin with the raw amino-acid sequence, 234 residues long: Phosphoribosylaminoimidazole-succinocarboxamide synthase (234 aa).

This sequence belongs to the SAICAR synthetase family.

It catalyses the reaction 5-amino-1-(5-phospho-D-ribosyl)imidazole-4-carboxylate + L-aspartate + ATP = (2S)-2-[5-amino-1-(5-phospho-beta-D-ribosyl)imidazole-4-carboxamido]succinate + ADP + phosphate + 2 H(+). It participates in purine metabolism; IMP biosynthesis via de novo pathway; 5-amino-1-(5-phospho-D-ribosyl)imidazole-4-carboxamide from 5-amino-1-(5-phospho-D-ribosyl)imidazole-4-carboxylate: step 1/2. The polypeptide is Phosphoribosylaminoimidazole-succinocarboxamide synthase (Sulfurisphaera tokodaii (strain DSM 16993 / JCM 10545 / NBRC 100140 / 7) (Sulfolobus tokodaii)).